The primary structure comprises 266 residues: Undecaprenyl-diphosphatase (266 aa).

8 helical membrane-spanning segments follow: residues 1–21 (MDTFQVIILALIQGLTEFLPI), 39–59 (QGLAFDVAVHIGSLLAVVLYF), 83–103 (SKLAWWIILATLPAVILGFAL), 111–131 (LRGPGVIAITTVLFGLLLWWA), 144–164 (TGWKKALLIGFAQALALIPGT), 183–203 (AAARFSFLMSIPVILGAAILM), 218–238 (SLALGVGVSFVAAYTCIHLFL), and 246–266 (MTPFVIYRLALGALLCAFIFM).

This sequence belongs to the UppP family.

It is found in the cell inner membrane. The catalysed reaction is di-trans,octa-cis-undecaprenyl diphosphate + H2O = di-trans,octa-cis-undecaprenyl phosphate + phosphate + H(+). Functionally, catalyzes the dephosphorylation of undecaprenyl diphosphate (UPP). Confers resistance to bacitracin. The sequence is that of Undecaprenyl-diphosphatase from Shewanella woodyi (strain ATCC 51908 / MS32).